The following is an 815-amino-acid chain: Serotype-specific mannosyltransferase WbdA (815 aa).

The alpha-(1-&gt;2)-mannosyltransferase stretch occupies residues 1–374 (MSRAIIENAG…WANTAHLAIE (374 aa)). The tract at residues 431 to 804 (KLLVDISVLA…WKQSAEFLLK (374 aa)) is alpha-(1-&gt;3)-mannosyltransferase.

It belongs to the glycosyltransferase group 1 family. Glycosyltransferase 4 subfamily. As to quaternary structure, monomer. Interacts with the C-terminal region of WbdD.

It localises to the cell inner membrane. The catalysed reaction is [alpha-D-Man-(1-&gt;3)-alpha-D-Man-(1-&gt;3)-alpha-D-Man-(1-&gt;2)-alpha-D-Man-(1-&gt;2)](n)-alpha-D-Man-(1-&gt;3)-alpha-D-Man-(1-&gt;3)-alpha-D-Man-(1-&gt;3)-alpha-D-GlcNAc-di-trans,octa-cis-undecaprenyl diphosphate + 2 GDP-alpha-D-mannose = alpha-D-Man-(1-&gt;2)-alpha-D-Man-(1-&gt;2)-[alpha-D-Man-(1-&gt;3)-alpha-D-Man-(1-&gt;3)-alpha-D-Man-(1-&gt;2)-alpha-D-Man-(1-&gt;2)](n)-alpha-D-Man-(1-&gt;3)-alpha-D-Man-(1-&gt;3)-alpha-D-Man-(1-&gt;3)-alpha-D-GlcNAc-di-trans,octa-cis-undecaprenyl diphosphate + 2 GDP + 2 H(+). The enzyme catalyses alpha-D-Man-(1-&gt;2)-alpha-D-Man-(1-&gt;2)-[alpha-D-Man-(1-&gt;3)-alpha-D-Man-(1-&gt;3)-alpha-D-Man-(1-&gt;2)-alpha-D-Man-(1-&gt;2)](n)-alpha-D-Man-(1-&gt;3)-alpha-D-Man-(1-&gt;3)-alpha-D-Man-(1-&gt;3)-alpha-D-GlcNAc-di-trans,octa-cis-undecaprenyl diphosphate + 2 GDP-alpha-D-mannose = [alpha-D-Man-(1-&gt;3)-alpha-D-Man-(1-&gt;3)-alpha-D-Man-(1-&gt;2)-alpha-D-Man-(1-&gt;2)](n+1)-alpha-D-Man-(1-&gt;3)-alpha-D-Man-(1-&gt;3)-alpha-D-Man-(1-&gt;3)-alpha-D-GlcNAc-di-trans,octa-cis-undecaprenyl diphosphate + 2 GDP + 2 H(+). Its pathway is bacterial outer membrane biogenesis; LPS O-antigen biosynthesis. Mannosyltransferase involved in the biosynthesis of the repeat unit of the lipopolysaccharide (LPS) O-antigen region. Catalyzes the polymerization of a tetrasaccharide repeat unit containing two alpha-(1-&gt;3)- and two alpha-(1-&gt;2)-linked mannopyranose residues. The sequence is that of Serotype-specific mannosyltransferase WbdA from Escherichia coli.